The chain runs to 445 residues: Adenylyltransferase and sulfurtransferase MOCS3 (445 aa).

The tract at residues 49-70 (LPPSAAAEVEPTGSPSSSSSAA) is disordered. ATP-binding positions include Gly106, Asp127, 134 to 138 (DNLHR), Lys151, and 170 to 171 (NN). Zn(2+) is bound by residues Cys211 and Cys214. Cys228 serves as the catalytic Glycyl thioester intermediate; for adenylyltransferase activity. Positions 286 and 289 each coordinate Zn(2+). One can recognise a Rhodanese domain in the interval 342-443 (SGRPHLLVDV…WAKEVDPSFL (102 aa)). The Cysteine persulfide intermediate; for sulfurtransferase activity role is filled by Cys403.

The protein in the N-terminal section; belongs to the HesA/MoeB/ThiF family. UBA4 subfamily. Requires Zn(2+) as cofactor.

The protein localises to the cytoplasm. The protein resides in the cytosol. It catalyses the reaction [molybdopterin-synthase sulfur-carrier protein]-C-terminal Gly-Gly + ATP + H(+) = [molybdopterin-synthase sulfur-carrier protein]-C-terminal Gly-Gly-AMP + diphosphate. The catalysed reaction is [molybdopterin-synthase sulfur-carrier protein]-C-terminal Gly-Gly-AMP + S-sulfanyl-L-cysteinyl-[cysteine desulfurase] + AH2 = [molybdopterin-synthase sulfur-carrier protein]-C-terminal-Gly-aminoethanethioate + L-cysteinyl-[cysteine desulfurase] + A + AMP + 2 H(+). It functions in the pathway tRNA modification; 5-methoxycarbonylmethyl-2-thiouridine-tRNA biosynthesis. The protein operates within cofactor biosynthesis; molybdopterin biosynthesis. In terms of biological role, plays a central role in 2-thiolation of mcm(5)S(2)U at tRNA wobble positions of cytosolic tRNA(Lys), tRNA(Glu) and tRNA(Gln). Also essential during biosynthesis of the molybdenum cofactor. Acts by mediating the C-terminal thiocarboxylation of sulfur carriers URM1 and MOCS2A. Its N-terminus first activates URM1 and MOCS2A as acyl-adenylates (-COAMP), then the persulfide sulfur on the catalytic cysteine is transferred to URM1 and MOCS2A to form thiocarboxylation (-COSH) of their C-terminus. The reaction probably involves hydrogen sulfide that is generated from the persulfide intermediate and that acts as a nucleophile towards URM1 and MOCS2A. Subsequently, a transient disulfide bond is formed. Does not use thiosulfate as sulfur donor; NFS1 probably acting as a sulfur donor for thiocarboxylation reactions. The sequence is that of Adenylyltransferase and sulfurtransferase MOCS3 from Oryza sativa subsp. japonica (Rice).